The primary structure comprises 540 residues: Zinc transporter ZIP5 (540 aa).

The signal sequence occupies residues 1-20 (MMGSPVSHLLAGFCVWVVLG). At 21–212 (WVGGSVPNLG…PAPPGDLLSA (192 aa)) the chain is on the extracellular side. N-linked (GlcNAc...) asparagine glycosylation is present at Asn-50. Positions 78-101 (HGPLTGRAASPAADNSTHRPQNPE) are disordered. Residues 90 to 101 (ADNSTHRPQNPE) show a composition bias toward polar residues. Asn-160 carries N-linked (GlcNAc...) asparagine glycosylation. Residues 213–233 (LLQSALAVLLLSLPSPLSLLL) traverse the membrane as a helical segment. Over 234–244 (LRLLGPRLLRP) the chain is Cytoplasmic. A helical transmembrane segment spans residues 245–265 (LLGFLGALAVGTLCGDALLHL). Over 266-287 (LPHAQEGRHAGPGGLPEKDLGP) the chain is Extracellular. The helical transmembrane segment at 288-308 (GLSVLGGLFLLFVLENMLGLL) threads the bilayer. Over 309 to 444 (RHRGLRPRCC…LLQSGLSFRR (136 aa)) the chain is Cytoplasmic. A disordered region spans residues 324 to 377 (NLETRNLDPENGSGMALQPLQAAPEPGAQGQREKNSQHPPALAPPGHQGHSHGH). Phosphoserine is present on Ser-336. A Pros-methylhistidine modification is found at His-375. Residues 445–465 (LLLLSLVSGALGLGGAVLGVG) form a helical membrane-spanning segment. The Extracellular segment spans residues 466–470 (LSLGP). The helical transmembrane segment at 471–491 (VPLTPWVFGVTAGVFLYVALV) threads the bilayer. Residues 492 to 508 (DMLPALLRPPEPLPTPH) are Cytoplasmic-facing. Residues 509–529 (VLLQGLGLLLGGGLMLAITLL) traverse the membrane as a helical segment. At 530–540 (EERLLPVTTEG) the chain is on the extracellular side.

The protein belongs to the ZIP transporter (TC 2.A.5) family. Homodimer. Post-translationally, methylated at His-375 by METTL9. N-Glycosylated. In terms of tissue distribution, expressed in liver, kidney, pancreas, small intestine, colon, spleen, fetal liver and fetal kidney.

Its subcellular location is the basolateral cell membrane. It carries out the reaction Zn(2+)(in) = Zn(2+)(out). Uniporter that transports zinc(2+) into polarized cells of enterocytes, pancreatic acinar and endoderm cells across the basolateral membrane and participates, notably, in zinc excretion from the intestine by the uptake of zinc from the blood into the intestine. The transport mechanism is temperature- and concentration-dependent and saturable. In addition, is also a high affinity copper transporter in vitro. Also may regulate glucose-stimulated insulin secretion (GSIS) in islets primarily through the zinc-activated SIRT1-PPARGC1A axis. Could regulate the BMP/TGF-beta (bone morphogenetic protein/transforming growth factor-beta) signaling pathway and modulates extracellular matrix (ECM) proteins of the sclera. Plays a role in eye development. The chain is Zinc transporter ZIP5 from Homo sapiens (Human).